Reading from the N-terminus, the 492-residue chain is AAA-ATPase At3g28520 (492 aa).

The helical transmembrane segment at 7–25 (IWGFTSTTMASIMFLWPMY) threads the bilayer. 249-256 (GPPGTGKS) is a binding site for ATP. Disordered stretches follow at residues 313-334 (KKKKEEDEDKEEKKEAENLKRV) and 462-492 (KIEKEARKNKKKAEDNVKQEKQNKVKGMVTK). Basic and acidic residues-rich tracts occupy residues 323–332 (EEKKEAENLK) and 462–484 (KIEKEARKNKKKAEDNVKQEKQN).

Belongs to the AAA ATPase family. BCS1 subfamily. The cofactor is Mg(2+).

It is found in the membrane. The enzyme catalyses ATP + H2O = ADP + phosphate + H(+). The chain is AAA-ATPase At3g28520 from Arabidopsis thaliana (Mouse-ear cress).